A 101-amino-acid chain; its full sequence is ATP synthase subunit c (101 aa).

Helical transmembrane passes span 35–55 and 81–101; these read IGAG…GLIG and GISE…IFVV.

It belongs to the ATPase C chain family. F-type ATPases have 2 components, F(1) - the catalytic core - and F(0) - the membrane proton channel. F(1) has five subunits: alpha(3), beta(3), gamma(1), delta(1), epsilon(1). F(0) has three main subunits: a(1), b(2) and c(10-14). The alpha and beta chains form an alternating ring which encloses part of the gamma chain. F(1) is attached to F(0) by a central stalk formed by the gamma and epsilon chains, while a peripheral stalk is formed by the delta and b chains.

The protein localises to the cell membrane. In terms of biological role, f(1)F(0) ATP synthase produces ATP from ADP in the presence of a proton or sodium gradient. F-type ATPases consist of two structural domains, F(1) containing the extramembraneous catalytic core and F(0) containing the membrane proton channel, linked together by a central stalk and a peripheral stalk. During catalysis, ATP synthesis in the catalytic domain of F(1) is coupled via a rotary mechanism of the central stalk subunits to proton translocation. Its function is as follows. Key component of the F(0) channel; it plays a direct role in translocation across the membrane. A homomeric c-ring of between 10-14 subunits forms the central stalk rotor element with the F(1) delta and epsilon subunits. The protein is ATP synthase subunit c of Mycoplasma capricolum subsp. capricolum (strain California kid / ATCC 27343 / NCTC 10154).